The primary structure comprises 176 residues: Cytochrome b (176 aa).

A run of 3 helical transmembrane segments spans residues 33–53 (FGSLLGICLALQILTGIFLAM), 77–98 (WVLRYLHANGASMFFICLYLHV), and 113–133 (WNMGVILLFAVMATAFMGYVL). Heme b contacts are provided by histidine 83 and histidine 97.

It belongs to the cytochrome b family. As to quaternary structure, the cytochrome bc1 complex contains 11 subunits: 3 respiratory subunits (MT-CYB, CYC1 and UQCRFS1), 2 core proteins (UQCRC1 and UQCRC2) and 6 low-molecular weight proteins (UQCRH/QCR6, UQCRB/QCR7, UQCRQ/QCR8, UQCR10/QCR9, UQCR11/QCR10 and a cleavage product of UQCRFS1). This cytochrome bc1 complex then forms a dimer. It depends on heme b as a cofactor.

The protein resides in the mitochondrion inner membrane. Component of the ubiquinol-cytochrome c reductase complex (complex III or cytochrome b-c1 complex) that is part of the mitochondrial respiratory chain. The b-c1 complex mediates electron transfer from ubiquinol to cytochrome c. Contributes to the generation of a proton gradient across the mitochondrial membrane that is then used for ATP synthesis. The polypeptide is Cytochrome b (MT-CYB) (Lasionycteris noctivagans (Silver-haired bat)).